Reading from the N-terminus, the 248-residue chain is Phosphoribosylformylglycinamidine synthase subunit PurQ (248 aa).

A Glutamine amidotransferase type-1 domain is found at 6 to 248 (AMVLRMEGTN…IFFRILYNST (243 aa)). The Nucleophile role is filled by Cys95. Active-site residues include His215 and Glu217.

As to quaternary structure, part of the FGAM synthase complex composed of 1 PurL, 1 PurQ and 2 PurS subunits.

The protein resides in the cytoplasm. The enzyme catalyses N(2)-formyl-N(1)-(5-phospho-beta-D-ribosyl)glycinamide + L-glutamine + ATP + H2O = 2-formamido-N(1)-(5-O-phospho-beta-D-ribosyl)acetamidine + L-glutamate + ADP + phosphate + H(+). It carries out the reaction L-glutamine + H2O = L-glutamate + NH4(+). Its pathway is purine metabolism; IMP biosynthesis via de novo pathway; 5-amino-1-(5-phospho-D-ribosyl)imidazole from N(2)-formyl-N(1)-(5-phospho-D-ribosyl)glycinamide: step 1/2. In terms of biological role, part of the phosphoribosylformylglycinamidine synthase complex involved in the purines biosynthetic pathway. Catalyzes the ATP-dependent conversion of formylglycinamide ribonucleotide (FGAR) and glutamine to yield formylglycinamidine ribonucleotide (FGAM) and glutamate. The FGAM synthase complex is composed of three subunits. PurQ produces an ammonia molecule by converting glutamine to glutamate. PurL transfers the ammonia molecule to FGAR to form FGAM in an ATP-dependent manner. PurS interacts with PurQ and PurL and is thought to assist in the transfer of the ammonia molecule from PurQ to PurL. The polypeptide is Phosphoribosylformylglycinamidine synthase subunit PurQ (Picrophilus torridus (strain ATCC 700027 / DSM 9790 / JCM 10055 / NBRC 100828 / KAW 2/3)).